A 218-amino-acid chain; its full sequence is Redox-sensing transcriptional repressor Rex (218 aa).

Positions 25 to 64 (WYLSYVQLLHADGCESVSSTRIARAVGVDASLVAKDLSYV) form a DNA-binding region, H-T-H motif. 99 to 104 (GVGSLG) lines the NAD(+) pocket.

This sequence belongs to the transcriptional regulatory Rex family. In terms of assembly, homodimer.

It localises to the cytoplasm. Functionally, modulates transcription in response to changes in cellular NADH/NAD(+) redox state. In Porphyromonas gingivalis (strain ATCC BAA-308 / W83), this protein is Redox-sensing transcriptional repressor Rex.